The primary structure comprises 2136 residues: U5 small nuclear ribonucleoprotein 200 kDa helicase (2136 aa).

A phosphoserine mark is found at Ser-17 and Ser-26. The disordered stretch occupies residues 39 to 81 (EVLSLVGKLEGTRMGDKAQRTKPQMQEERRAKRRKRDEDRHDM). Lys-46 is covalently cross-linked (Glycyl lysine isopeptide (Lys-Gly) (interchain with G-Cter in SUMO2)). Positions 48–81 (EGTRMGDKAQRTKPQMQEERRAKRRKRDEDRHDM) are enriched in basic and acidic residues. Residues 54 to 84 (DKAQRTKPQMQEERRAKRRKRDEDRHDMNKM) adopt a coiled-coil conformation. Ser-225 is subject to Phosphoserine. At Thr-389 the chain carries Phosphothreonine. Residues 395 to 2129 (DLDQGGEALA…YKFSVDVKEA (1735 aa)) form an interaction with C9orf78 and WBP4 region. The Helicase ATP-binding 1 domain occupies 490 to 673 (RAALETDENL…FLRVDPAKGL (184 aa)). 503–510 (APTGAGKT) provides a ligand contact to ATP. The short motif at 615 to 618 (DEIH) is the DEAH box element. The region spanning 684–921 (PLEQTYVGIT…NAKDAVNWLG (238 aa)) is the Helicase C-terminal 1 domain. Tyr-709 is modified (phosphotyrosine). Lys-944 participates in a covalent cross-link: Glycyl lysine isopeptide (Lys-Gly) (interchain with G-Cter in SUMO). An N6-acetyllysine; alternate modification is found at Lys-971. Lys-971 is covalently cross-linked (Glycyl lysine isopeptide (Lys-Gly) (interchain with G-Cter in SUMO); alternate). Residues 982–1286 (TELGRIASHY…SCETQLPVSF (305 aa)) form the SEC63 1 domain. Residues Lys-1071 and Lys-1199 each participate in a glycyl lysine isopeptide (Lys-Gly) (interchain with G-Cter in SUMO) cross-link. Residues 1282–2136 (LPVSFRHLIL…KEAETDSDSD (855 aa)) form an interaction with TSSC4 region. Residues 1337–1512 (NTVYNSDDNV…WLGCSATSTF (176 aa)) form the Helicase ATP-binding 2 domain. Position 1350–1357 (1350–1357 (APTGSGKT)) interacts with ATP. Phosphothreonine is present on Thr-1428. Residues 1454–1457 (DEVH) carry the DEAH box motif. The Helicase C-terminal 2 domain maps to 1545-1753 (PVYHAITKHS…TIENKQDAVD (209 aa)). Thr-1765 carries the phosphothreonine modification. The 313-residue stretch at 1812–2124 (PLNLGMIAAY…GCDQEYKFSV (313 aa)) folds into the SEC63 2 domain. Ser-2002 carries the post-translational modification Phosphoserine. A Glycyl lysine isopeptide (Lys-Gly) (interchain with G-Cter in SUMO) cross-link involves residue Lys-2091. A Phosphothreonine modification is found at Thr-2131. Ser-2133 and Ser-2135 each carry phosphoserine.

The protein belongs to the helicase family. SKI2 subfamily. As to quaternary structure, component of a core complex containing at least PRPF8, SNRNP200, EFTUD2 and SNRNP40. Component of the U5 snRNP and U4/U6-U5 tri-snRNP complexes, building blocks of the spliceosome. Component of the U4/U6-U5 tri-snRNP complex composed of the U4, U6 and U5 snRNAs and at least PRPF3, PRPF4, PRPF6, PRPF8, PRPF31, SNRNP200, TXNL4A, SNRNP40, DDX23, CD2BP2, PPIH, SNU13, EFTUD2, SART1 and USP39. Component of precatalytic, catalytic and postcatalytic spliceosomal complexes. Component of the minor spliceosome, which splices U12-type introns. Interacts with C9orf78; the interaction is direct and mutually exclusive with its interaction with WBP4. Interacts with WBP4; the interaction is mutually exclusive with its interaction with C9orf78. Interacts with PRPF8. Interacts with TSSC4; the interaction is direct, excludes recruitment of C9ORF78 and WBP4 to SNRNP200 and negatively regulates its RNA helicase activity.

The protein localises to the nucleus. It carries out the reaction ATP + H2O = ADP + phosphate + H(+). Functionally, catalyzes the ATP-dependent unwinding of U4/U6 RNA duplices, an essential step in the assembly of a catalytically active spliceosome. Plays a role in pre-mRNA splicing as core component of precatalytic, catalytic and postcatalytic spliceosomal complexes. As a component of the minor spliceosome, involved in the splicing of U12-type introns in pre-mRNAs. Involved in spliceosome assembly, activation and disassembly. Mediates changes in the dynamic network of RNA-RNA interactions in the spliceosome. The protein is U5 small nuclear ribonucleoprotein 200 kDa helicase (Snrnp200) of Mus musculus (Mouse).